The primary structure comprises 1379 residues: MARNLRNRRGSDVEDASNAKVGYETQIKDENGIIHTTTRSLRKINYAEIEKVFDFLEDDQVMDKDETPVDVTSDEHHNNNQKGDDEDDDVDLVSPHENARTNEELTNERNLRKRKAHDPEEDDESFHEEDVDDDEEEEEADEFEDEYLDEDSKDNNRRRRAADRKFVVPDPDDDEEYDEDDEEGDRISHSASSKRLKRANSRRTRSSRHPETPPPVRRALRSRTRHSRTSNEENDDENDNSRNEALTLADEIRELQEDSPIREKRFLRERTKPVNYKLPPPLTASNAEEFIDKNNNALSFHNPSPARRGRGGWNASQNSGPTRRLFPTGGPFGGNDVTTIFGKNTNFYNQVPSAFSDNNNNKLILDSDSSDDEILPLGVTPKTKKENTQKKKKKKPEIADLDPLGVDMNVNFDDIGGLDNYIDQLKEMVALPLLYPELYQNFNITPPRGVLFHGPPGTGKTLMARALAASCSSDERKITFFMRKGADILSKWVGEAERQLRLLFEEAKKHQPSIIFFDEIDGLAPVRSSKQEQIHASIVSTLLALMDGMDNRGQVIVIGATNRPDAVDPALRRPGRFDREFYFPLPDVKARFKILQIQTRKWSSPLSTNFIDKLAFLTKGYGGADLRSLCTEAALISIQRSFPQIYRSNDKLLVDPSKIKVKVSDFMLALKKIVPSSARSTGSSPQPLPELIKPLLADQLNNLKNKLDYMLNIKDTTFQRNTSLLQNFIDYEEYSGEEEEHDKYGGNEDTSSFRSYEFFESMAESQICKPRLLINGPKGNGQQYVGAAILNYLEEFNVQNLDLASLVSESSRTIEAAVVQSFMEAKKRQPSVVFIPNLDIWINTIPENVILVLSGLFRSLQSNEKILLLCLAENLDISEVKNGILSDFAFDKNIFQLHKPSKENITRYFSNLIELLKTKPSDIPMKKRRVKPLPELQKVTSNAAPTNFDENGEPLSEKVVLRRKLKSFQHQDMRLKNVLKIKLSGLMDLFKNRYKRFRKPPIDDAFLVHLFEPETSNDPNWQPAYIKDENMILEVSTGRKFFNMDLDIVEERLWNGYYSEPKQFLKDIELIYRDANTIGDRERVIKASEMFANAQMGIEEISTPDFIQECKATRQRDLERQELFLEDEEKRAAMELEAKEQSQENILQEPDLKDNKANEFGVAAGNQLQAQLQTTINTASIVNNSEVPQPIDTNLYKKEIPAAIPSAVDKEKAVIPEDSGANEEYTTELIQATCTSEITTDDDERARKEPKENEDSLQTQVTEENFSKIDANTNNINHVKEIQSVNKPNSLHETVEKRERSPIPKEVVEPEQGKKSDKELILTPEQIKKVSACLIEHCQNFTVSQLEDVHSSVAKIIWKSKSAWDKTGTVDEIIKFLSE.

Disordered stretches follow at residues methionine 1 to arginine 39 and aspartate 54 to asparagine 243. Alanine 2 carries the N-acetylalanine modification. Residues serine 11 and serine 17 each carry the phosphoserine modification. Over residues valine 61–asparagine 78 the composition is skewed to basic and acidic residues. Phosphoserine is present on serine 94. Residues glutamate 97–asparagine 110 show a composition bias toward basic and acidic residues. Acidic residues-rich tracts occupy residues proline 119–serine 152 and aspartate 170–glycine 184. Over residues serine 192–serine 207 the composition is skewed to basic residues. Threonine 212 bears the Phosphothreonine mark. Over residues arginine 218 to arginine 228 the composition is skewed to basic residues. Threonine 229 carries the phosphothreonine modification. Serine 241, serine 259, and serine 285 each carry phosphoserine. The tract at residues asparagine 302 to glycine 330 is disordered. Phosphoserine occurs at positions 367, 369, and 370. Residues leucine 375–proline 396 are disordered. An AAA-ATPase; required for its chromatin boundary function region spans residues valine 450–aspartate 578. Residue glycine 454–threonine 461 participates in ATP binding. Serine 735 carries the post-translational modification Phosphoserine. Positions arginine 974 to isoleucine 1101 constitute a Bromo domain. Serine 1142 is modified (phosphoserine). Disordered stretches follow at residues threonine 1233–asparagine 1274 and leucine 1291–serine 1316. A compositionally biased stretch (basic and acidic residues) spans glutamate 1244–glutamate 1254. A Phosphoserine modification is found at serine 1256. Over residues serine 1256–asparagine 1274 the composition is skewed to polar residues. Residues glutamate 1293–serine 1316 are compositionally biased toward basic and acidic residues.

This sequence belongs to the AAA ATPase family. Interacts with CSE4/CENP-A. Interacts with SCM3. Interacts with SPT16. Interacts with POB3. Interacts with the casein kinase II complex subunits CKA1, CKA2, CKB1 and CKB2. Interacts with RNA polymerase II. Interacts (via Bromo domain) with histone H3. Interacts (via Bromo domain) with histone H4. In terms of processing, phosphorylated by CDK1 and casein kinase II during S-phase, which leads to its eviction from histone gene promoters and promotes histone gene transcription.

The protein resides in the chromosome. Its subcellular location is the centromere. It localises to the nucleus. Its function is as follows. Functions as an ATP-dependent nucleosome disassembly factor that helps evict canonical histone H3 from the 5'-end of genes upon their induction. Also contributes to kinetochore assembly by cooperating with SCM3 to load the histone H3 variant CSE4/CENP-A at centromeres. Provides a chromatin boundary function at the 5'-end of genes that restricts access by RTT106 and thus prevents ectopic spreading of repressive chromatin into coding regions. Also prevents heterochromatin spreading downstream of the silent mating-type locus HMR, this function is independent of the tRNA boundary element. Contributes to appropriate cell cycle regulation of histone gene expression by recruiting RNA polymerase II to histone genes, and subsequent CDK1- and casein kinase II-dependent eviction from chromatin is required to promote transcriptional elongation. In Saccharomyces cerevisiae (strain ATCC 204508 / S288c) (Baker's yeast), this protein is ATPase histone chaperone YTA7.